Reading from the N-terminus, the 322-residue chain is Putative A-type inclusion protein (322 aa).

The segment at 284-322 (LTTEATGSVEVAPPSTDVTEPISDVTPSVDVEPEHPPAF) is disordered.

Belongs to the chordopoxvirinae A26 protein family.

Encodes a truncated version of poxvirus A26 protein. This chain is Putative A-type inclusion protein, found in Vaccinia virus (strain Copenhagen) (VACV).